Here is a 256-residue protein sequence, read N- to C-terminus: uncharacterized protein (256 aa).

The S4 RNA-binding domain maps to 16 to 83; that stretch reads VRLQKILSRA…DSLVYLALNK (68 aa). Aspartate 121 serves as the catalytic Nucleophile.

It belongs to the pseudouridine synthase RsuA family.

The enzyme catalyses a uridine in RNA = a pseudouridine in RNA. This is an uncharacterized protein from Mycobacterium leprae (strain TN).